The following is a 100-amino-acid chain: Small ribosomal subunit protein uS14 (100 aa).

This sequence belongs to the universal ribosomal protein uS14 family. Part of the 30S ribosomal subunit. Contacts proteins S3 and S10.

Its function is as follows. Binds 16S rRNA, required for the assembly of 30S particles and may also be responsible for determining the conformation of the 16S rRNA at the A site. The protein is Small ribosomal subunit protein uS14 of Picosynechococcus sp. (strain ATCC 27264 / PCC 7002 / PR-6) (Agmenellum quadruplicatum).